Consider the following 147-residue polypeptide: Large ribosomal subunit protein bL9 (147 aa).

The segment at 44 to 63 is disordered; that stretch reads VKTLDAQKRSEDKRKEQEKL. A compositionally biased stretch (basic and acidic residues) spans 48–63; that stretch reads DAQKRSEDKRKEQEKL.

The protein belongs to the bacterial ribosomal protein bL9 family.

In terms of biological role, binds to the 23S rRNA. This Brevibacillus brevis (strain 47 / JCM 6285 / NBRC 100599) protein is Large ribosomal subunit protein bL9.